Reading from the N-terminus, the 447-residue chain is Chromosomal replication initiator protein DnaA (447 aa).

The segment at 1 to 79 (MVSCENLWQQ…TGQEITVKLI (79 aa)) is domain I, interacts with DnaA modulators. Residues 79–105 (ITDGLEPHSLIGQESSLPMETTPKNAT) form a domain II region. The domain III, AAA+ region stretch occupies residues 106 to 322 (ALNGKYTFSR…GALIRAIAYT (217 aa)). ATP contacts are provided by Gly150, Gly152, Lys153, and Thr154. The domain IV, binds dsDNA stretch occupies residues 323–447 (SLSNVAMTVE…INIAGQAPES (125 aa)).

The protein belongs to the DnaA family. In terms of assembly, oligomerizes as a right-handed, spiral filament on DNA at oriC.

The protein localises to the cytoplasm. In terms of biological role, plays an essential role in the initiation and regulation of chromosomal replication. ATP-DnaA binds to the origin of replication (oriC) to initiate formation of the DNA replication initiation complex once per cell cycle. Binds the DnaA box (a 9 base pair repeat at the origin) and separates the double-stranded (ds)DNA. Forms a right-handed helical filament on oriC DNA; dsDNA binds to the exterior of the filament while single-stranded (ss)DNA is stabiized in the filament's interior. The ATP-DnaA-oriC complex binds and stabilizes one strand of the AT-rich DNA unwinding element (DUE), permitting loading of DNA polymerase. After initiation quickly degrades to an ADP-DnaA complex that is not apt for DNA replication. Binds acidic phospholipids. Isolated domain IV (residues 348-447) binds both E.coli and B.subtilis oriC. This is Chromosomal replication initiator protein DnaA from Synechocystis sp. (strain ATCC 27184 / PCC 6803 / Kazusa).